We begin with the raw amino-acid sequence, 485 residues long: Retron Mx162 reverse transcriptase (485 aa).

A disordered region spans residues 1-33 (MTARLDPFVPAASPQAVPTPELTAPSSDAAAKR). The Reverse transcriptase domain maps to 167–407 (RWFAFHREVD…TRQRVTGLVV (241 aa)). Residues D250, D346, and D347 each contribute to the Mg(2+) site.

Belongs to the bacterial reverse transcriptase family.

It catalyses the reaction DNA(n) + a 2'-deoxyribonucleoside 5'-triphosphate = DNA(n+1) + diphosphate. With respect to regulation, msDNA synthesis is inhibited by rifampicin and chloramphenicol. Reverse transcriptase (RT) responsible for synthesis of msDNA-Mx162 (a branched molecule with RNA linked by a 2',5'-phosphodiester bond to ssDNA). The retron transcript serves as primer (from a conserved internal G residue) and template for the reaction, and codes for the RT. The retron is involved in antiviral defense. This chain is Retron Mx162 reverse transcriptase, found in Myxococcus xanthus.